A 95-amino-acid chain; its full sequence is Co-chaperonin GroES (95 aa).

This sequence belongs to the GroES chaperonin family. In terms of assembly, heptamer of 7 subunits arranged in a ring. Interacts with the chaperonin GroEL.

The protein localises to the cytoplasm. In terms of biological role, together with the chaperonin GroEL, plays an essential role in assisting protein folding. The GroEL-GroES system forms a nano-cage that allows encapsulation of the non-native substrate proteins and provides a physical environment optimized to promote and accelerate protein folding. GroES binds to the apical surface of the GroEL ring, thereby capping the opening of the GroEL channel. The protein is Co-chaperonin GroES of Stenotrophomonas maltophilia (strain K279a).